The sequence spans 160 residues: Cathelin-related peptide SC5 (160 aa).

Positions 1-29 are cleaved as a signal peptide; the sequence is METQRASLSLGRRSLWLLLLGLVLASASA. A propeptide spanning residues 30-131 is cleaved from the precursor; it reads QALSYREAVL…DITCAEPQSV (102 aa). 2 disulfides stabilise this stretch: Cys-86–Cys-97 and Cys-108–Cys-125.

It belongs to the cathelicidin family.

The protein resides in the secreted. Broad spectrum bactericidal agent. The polypeptide is Cathelin-related peptide SC5 (Ovis aries (Sheep)).